The chain runs to 178 residues: Endothelin-2 (178 aa).

A signal peptide spans Met-1–Gly-24. Residues Gln-25–Pro-46 constitute a propeptide that is removed on maturation. Disulfide bonds link Cys-49–Cys-63 and Cys-51–Cys-59. Residues Val-70–Thr-178 constitute a propeptide that is removed on maturation. The tract at residues Cys-96 to His-111 is endothelin-like. The segment at Ala-158 to Thr-178 is disordered. The span at Gln-160 to Arg-169 shows a compositional bias: basic and acidic residues.

The protein belongs to the endothelin/sarafotoxin family.

The protein resides in the secreted. Functionally, endothelins are endothelium-derived vasoconstrictor peptides. The chain is Endothelin-2 (EDN2) from Mustela putorius furo (European domestic ferret).